A 205-amino-acid chain; its full sequence is Imidazoleglycerol-phosphate dehydratase (205 aa).

Residues 1-27 are disordered; it reads MKQASPRAGGAKARRGQVARKTKETDV.

This sequence belongs to the imidazoleglycerol-phosphate dehydratase family.

The protein resides in the cytoplasm. The enzyme catalyses D-erythro-1-(imidazol-4-yl)glycerol 3-phosphate = 3-(imidazol-4-yl)-2-oxopropyl phosphate + H2O. The protein operates within amino-acid biosynthesis; L-histidine biosynthesis; L-histidine from 5-phospho-alpha-D-ribose 1-diphosphate: step 6/9. The polypeptide is Imidazoleglycerol-phosphate dehydratase (Anaeromyxobacter sp. (strain Fw109-5)).